A 1442-amino-acid chain; its full sequence is Clustered mitochondria protein homolog (1442 aa).

2 disordered regions span residues 38–100 (NYRN…KKPD) and 237–258 (GRSE…KDRP). Over residues 82-100 (SEGEQQKDKTAAEDKKKPD) the composition is skewed to basic and acidic residues. Residues 394–636 (RAEDTFSSKL…RTFPPDVNFL (243 aa)) enclose the Clu domain. 2 stretches are compositionally biased toward basic and acidic residues: residues 696-714 (QKQE…EPKA) and 737-763 (ESKE…KVET). Disordered regions lie at residues 696 to 763 (QKQE…KVET) and 949 to 984 (SESD…SFQC). Residues 949–958 (SESDALTKSG) are compositionally biased toward polar residues. TPR repeat units lie at residues 1087-1120 (AYNF…LNNV), 1213-1246 (ALLD…NIKY), and 1248-1281 (GEKS…EKET). Residues 1373-1442 (RQKEGGTSEQ…SSNASAQQVS (70 aa)) are disordered. The segment covering 1380–1390 (SEQAAAAQASQ) has biased composition (low complexity). A compositionally biased stretch (polar residues) spans 1424–1442 (ASSSKQADNSSNASAQQVS).

The protein belongs to the CLU family.

Its subcellular location is the cytoplasm. Functionally, mRNA-binding protein involved in proper cytoplasmic distribution of mitochondria. The sequence is that of Clustered mitochondria protein homolog from Aedes aegypti (Yellowfever mosquito).